A 319-amino-acid chain; its full sequence is MAVPQSIPPPTAAPIESKDQVFARSKAFWDNYLRGRPQVPPSFFQRIYRYHREHGGRFGTVHDVGAGIGPYAGELRSQFPHVIVSDIVPKNVQLAEAHLGRDGFRYRAAPVEVADDLPPGSVDLAFATNVMHFADQHAAMQAIATQLRPGGTFACAGFGPARFDDPDIQDVWERISQQGGRILLGMAEHPPDTINVMSRSSKEYNVAPLEPQWFRPGALRIRLNMAQGGITGLLPPERQQEVTDPDFAGPRDVVVYETNEEWRFETDWEGFLQHFRSFPHAGADPAAFTGLLQELKDLLDEGRCLRGCWPATLILATRR.

The interval 63 to 155 is methyltransferase domain; it reads DVGAGIGPYA…QLRPGGTFAC (93 aa).

It belongs to the methyltransferase superfamily. As to expression, specifically expressed in conidia.

It participates in secondary metabolite biosynthesis. Functionally, methyltransferase; part of the gene cluster that mediates the biosynthesis of trypacidin, a mycotoxin with antiprotozoal activity and that plays a role in the infection process. The pathway begins with the synthesis of atrochrysone thioester by the polyketide synthase (PKS) tpcC. The atrochrysone carboxyl ACP thioesterase tpcB then breaks the thioester bond and releases the atrochrysone carboxylic acid from tpcC. The decarboxylase tpcK converts atrochrysone carboxylic acid to atrochrysone which is further reduced into emodin anthrone. The next step is performed by the emodin anthrone oxygenase tpcL that catalyzes the oxidation of emodinanthrone to emodin. Emodin O-methyltransferase encoded by tpcA catalyzes methylation of the 8-hydroxy group of emodin to form questin. Ring cleavage of questin by questin oxidase tpcI leads to desmethylsulochrin via several intermediates including questin epoxide. Another methylation step catalyzed by tpcM leads to the formation of sulochrin which is further converted to monomethylsulfochrin by tpcH. Finally, the tpcJ catalyzes the conversion of monomethylsulfochrin to trypacidin. Trypacidin is toxic for human pulmonary and bronchial epithelial cells by initiating the intracellular formation of nitric oxide (NO) and hydrogen peroxide (H(2)O(2)), thus triggering host necrotic cell death. The trypacidin pathway is also able to produce endocrocin via a distinct route from the endocrocin Enc pathway. The protein is Methyltransferase tpcM of Aspergillus fumigatus (strain ATCC MYA-4609 / CBS 101355 / FGSC A1100 / Af293) (Neosartorya fumigata).